Consider the following 213-residue polypeptide: Glutathione S-transferase PARB (213 aa).

The GST N-terminal domain maps to 1 to 82 (MAIKVHGSPM…YIAHVYADNG (82 aa)). Glutathione is bound by residues Ser-11, 12–13 (TA), 40–41 (HK), 53–54 (QV), and 66–67 (ES). One can recognise a GST C-terminal domain in the interval 89–213 (DPKKMPSMSV…WVKGLEKLQK (125 aa)).

Belongs to the GST superfamily. Phi family.

It carries out the reaction RX + glutathione = an S-substituted glutathione + a halide anion + H(+). Functionally, conjugation of reduced glutathione to a wide number of exogenous and endogenous hydrophobic electrophiles. This is Glutathione S-transferase PARB from Nicotiana tabacum (Common tobacco).